Reading from the N-terminus, the 306-residue chain is MPQSHIPVMLNEMLANLAPKDGEFYLDCTFGAGGYSKAILESCDCYITALDRDPNVIKKAEEIKQNYGERFDFIETNFADSFAKLKEKKFDGVVLDLGVSSMQLDIADRGFSFLHDGPLDMRMSGQGLSAEEFVNIAEEKELADVIYKYGDESFSRRIAKRIVEYRKTTRIDSTGKLAQIVRSSIGFRKGKIDPATKTFQAIRIYINNELGELERFLANVKNILKKDGRLVVVSFHSLEDRIVKNFFKENSEKPVARSKYAKDDIAIDPDKWLKIITNKALATSDKEVGLNIRARSAKLRAAKKIL.

Residues G33–Y35, D51, F78, D96, and Q103 contribute to the S-adenosyl-L-methionine site.

The protein belongs to the methyltransferase superfamily. RsmH family.

It localises to the cytoplasm. It carries out the reaction cytidine(1402) in 16S rRNA + S-adenosyl-L-methionine = N(4)-methylcytidine(1402) in 16S rRNA + S-adenosyl-L-homocysteine + H(+). In terms of biological role, specifically methylates the N4 position of cytidine in position 1402 (C1402) of 16S rRNA. The protein is Ribosomal RNA small subunit methyltransferase H of Rickettsia felis (strain ATCC VR-1525 / URRWXCal2) (Rickettsia azadi).